We begin with the raw amino-acid sequence, 252 residues long: MKKEIKKNYRIGIIAALQQEVQILFNKLKNYKINKISNITFYIGNIHNIHVVLAKSGVGKVFSGITCALLLQKYKVKFIINIGSAGSLNKNLKPGSIIIPTNVCYHDVNLTAFGYSIGQIKNCPKTFLSNTLMLKLTEKYLFENKIKYQKKLMISGDIFIDTCEKKSLLKKRFPKAIAVDMEAAAIAHVCYQFNIPILIIKSISDSSDINAADNFKYFINLASKNSSLVTINVLQTLFKNTKNILFDNNNRC.

Glutamate 20 (proton acceptor) is an active-site residue. Substrate-binding positions include glycine 86, isoleucine 160, and 181 to 182 (ME). Residue aspartate 205 is the Proton donor of the active site.

This sequence belongs to the PNP/UDP phosphorylase family. MtnN subfamily. As to quaternary structure, homodimer.

The catalysed reaction is S-adenosyl-L-homocysteine + H2O = S-(5-deoxy-D-ribos-5-yl)-L-homocysteine + adenine. The enzyme catalyses S-methyl-5'-thioadenosine + H2O = 5-(methylsulfanyl)-D-ribose + adenine. It carries out the reaction 5'-deoxyadenosine + H2O = 5-deoxy-D-ribose + adenine. Its pathway is amino-acid biosynthesis; L-methionine biosynthesis via salvage pathway; S-methyl-5-thio-alpha-D-ribose 1-phosphate from S-methyl-5'-thioadenosine (hydrolase route): step 1/2. Functionally, catalyzes the irreversible cleavage of the glycosidic bond in both 5'-methylthioadenosine (MTA) and S-adenosylhomocysteine (SAH/AdoHcy) to adenine and the corresponding thioribose, 5'-methylthioribose and S-ribosylhomocysteine, respectively. Also cleaves 5'-deoxyadenosine, a toxic by-product of radical S-adenosylmethionine (SAM) enzymes, into 5-deoxyribose and adenine. Thus, is required for in vivo function of the radical SAM enzymes biotin synthase and lipoic acid synthase, that are inhibited by 5'-deoxyadenosine accumulation. This is 5'-methylthioadenosine/S-adenosylhomocysteine nucleosidase from Buchnera aphidicola subsp. Baizongia pistaciae (strain Bp).